Consider the following 394-residue polypeptide: tRNA-specific adenosine deaminase 1 (394 aa).

The region spanning 54–388 is the A to I editase domain; that stretch reads SLGCGTKCIG…TKKPHELLDF (335 aa). Histidine 78 serves as a coordination point for Zn(2+). The active-site Proton donor is the glutamate 80. Residues arginine 84 and arginine 85 each coordinate 1D-myo-inositol hexakisphosphate. Residues cysteine 127 and cysteine 191 each contribute to the Zn(2+) site. 1D-myo-inositol hexakisphosphate contacts are provided by lysine 194, arginine 197, lysine 320, lysine 357, and lysine 381.

The protein belongs to the ADAT1 family. The cofactor is 1D-myo-inositol hexakisphosphate. In terms of tissue distribution, widely expressed in early embryos, and later concentrates in the central nervous system.

It carries out the reaction adenosine(37) in tRNA(Ala) + H2O + H(+) = inosine(37) in tRNA(Ala) + NH4(+). In terms of biological role, specifically deaminates adenosine-37 to inosine in tRNA-Ala. This is tRNA-specific adenosine deaminase 1 from Drosophila melanogaster (Fruit fly).